Consider the following 517-residue polypeptide: Pentatricopeptide repeat-containing protein At1g77360, mitochondrial (517 aa).

The N-terminal 59 residues, 1–59, are a transit peptide targeting the mitochondrion; that stretch reads MKRFRIRSVDFRQLVNFFSFMRWECSSSATVWVRFNMTIRIINRQSRFCCKSFLSARLY. 10 PPR repeats span residues 133-163, 167-201, 202-232, 236-270, 271-305, 306-340, 341-375, 376-406, 410-444, and 445-479; these read SVRAYHMMIESTAKIRQYKLMWDLINAMRKK, NVETFCIVMRKYARAQKVDEAIYAFNVMEKYDLPP, NLVAFNGLLSALCKSKNVRKAQEVFENMRDR, DSKTYSILLEGWGKEPNLPKAREVFREMIDAGCHP, DIVTYSIMVDILCKAGRVDEALGIVRSMDPSICKP, TTFIYSVLVHTYGTENRLEEAVDTFLEMERSGMKA, DVAVFNSLIGAFCKANRMKNVYRVLKEMKSKGVTP, NSKSCNIILRHLIERGEKDEAFDVFRKMIKV, DADTYTMVIKMFCEKKEMETADKVWKYMRKKGVFP, and SMHTFSVLINGLCEERTTQKACVLLEEMIEMGIRP.

This sequence belongs to the PPR family. P subfamily.

The protein resides in the mitochondrion. The sequence is that of Pentatricopeptide repeat-containing protein At1g77360, mitochondrial from Arabidopsis thaliana (Mouse-ear cress).